Here is a 221-residue protein sequence, read N- to C-terminus: Endonuclease V (221 aa).

2 residues coordinate Mg(2+): Asp-43 and Asp-111.

This sequence belongs to the endonuclease V family. Mg(2+) is required as a cofactor.

It is found in the cytoplasm. It carries out the reaction Endonucleolytic cleavage at apurinic or apyrimidinic sites to products with a 5'-phosphate.. DNA repair enzyme involved in the repair of deaminated bases. Selectively cleaves double-stranded DNA at the second phosphodiester bond 3' to a deoxyinosine leaving behind the intact lesion on the nicked DNA. The chain is Endonuclease V from Azotobacter vinelandii (strain DJ / ATCC BAA-1303).